A 149-amino-acid polypeptide reads, in one-letter code: Ribonuclease pancreatic (149 aa).

Residues 1–25 (MGLENSLILFSLLVLVLGWVQPSLG) form the signal peptide. Positions 25 to 62 (GKESSPDKFKRQHMDTEGSSKSSPTYCNQMRSPQEMTK) are disordered. The segment covering 28 to 42 (SSPDKFKRQHMDTEG) has biased composition (basic and acidic residues). Residues Lys32 and Arg35 each coordinate substrate. Residue His37 is the Proton acceptor of the active site. Residues 43–61 (SSKSSPTYCNQMRSPQEMT) are compositionally biased toward polar residues. Intrachain disulfides connect Cys51/Cys109, Cys65/Cys120, Cys83/Cys135, and Cys90/Cys97. Residues 66–70 (KPVNT) and Lys91 contribute to the substrate site. His144 functions as the Proton donor in the catalytic mechanism.

It belongs to the pancreatic ribonuclease family. In terms of assembly, monomer. Interacts with and forms tight 1:1 complexes with RNH1. Dimerization of two such complexes may occur. Interaction with RNH1 inhibits this protein.

The protein resides in the secreted. It carries out the reaction an [RNA] containing cytidine + H2O = an [RNA]-3'-cytidine-3'-phosphate + a 5'-hydroxy-ribonucleotide-3'-[RNA].. The enzyme catalyses an [RNA] containing uridine + H2O = an [RNA]-3'-uridine-3'-phosphate + a 5'-hydroxy-ribonucleotide-3'-[RNA].. Its function is as follows. Endonuclease that catalyzes the cleavage of RNA on the 3' side of pyrimidine nucleotides. Acts on single-stranded and double-stranded RNA. The protein is Ribonuclease pancreatic (RNASE1) of Sundamys muelleri (Mueller's giant sunda rat).